Consider the following 102-residue polypeptide: uncharacterized protein (102 aa).

A helical transmembrane segment spans residues 29-52 (IGSTYFCFGGAIFILVAPLTNLVY).

The protein localises to the membrane. This is an uncharacterized protein from Saccharomyces cerevisiae (strain ATCC 204508 / S288c) (Baker's yeast).